Here is a 408-residue protein sequence, read N- to C-terminus: Peptidase T (408 aa).

His78 is a Zn(2+) binding site. The active site involves Asp80. Asp140 is a Zn(2+) binding site. Glu173 acts as the Proton acceptor in catalysis. Positions 174, 196, and 379 each coordinate Zn(2+).

The protein belongs to the peptidase M20B family. Zn(2+) is required as a cofactor.

Its subcellular location is the cytoplasm. It carries out the reaction Release of the N-terminal residue from a tripeptide.. Cleaves the N-terminal amino acid of tripeptides. This is Peptidase T from Shigella boydii serotype 18 (strain CDC 3083-94 / BS512).